A 235-amino-acid polypeptide reads, in one-letter code: Carboxy-S-adenosyl-L-methionine synthase (235 aa).

S-adenosyl-L-methionine-binding positions include tyrosine 35, 60-62 (GCS), 83-84 (DN), asparagine 124, and arginine 191.

The protein belongs to the class I-like SAM-binding methyltransferase superfamily. Cx-SAM synthase family. In terms of assembly, homodimer.

It catalyses the reaction prephenate + S-adenosyl-L-methionine = carboxy-S-adenosyl-L-methionine + 3-phenylpyruvate + H2O. Catalyzes the conversion of S-adenosyl-L-methionine (SAM) to carboxy-S-adenosyl-L-methionine (Cx-SAM). This chain is Carboxy-S-adenosyl-L-methionine synthase, found in Campylobacter jejuni subsp. jejuni serotype O:2 (strain ATCC 700819 / NCTC 11168).